A 272-amino-acid chain; its full sequence is B3 domain-containing protein Os10g0323000 (272 aa).

The segment at residues Arg39–His132 is a DNA-binding region (TF-B3 1). The tract at residues Pro139–Ile171 is disordered. Basic and acidic residues predominate over residues Ser141–Gly159. A DNA-binding region (TF-B3 2) is located at residues Glu180–Phe272.

The protein localises to the nucleus. The chain is B3 domain-containing protein Os10g0323000 from Oryza sativa subsp. japonica (Rice).